The following is a 22-amino-acid chain: Alpha-amylase inhibitor DR4 (22 aa).

The disordered stretch occupies residues 1-22 (SGGGKEAAETFNRVESHPRPDA).

In terms of biological role, inhibits insect alpha-amylases. The sequence is that of Alpha-amylase inhibitor DR4 from Delonix regia (Royal poinciana).